Here is a 24-residue protein sequence, read N- to C-terminus: Neurotoxin 5 (24 aa).

An LCN-type CS-alpha/beta domain is found at arginine 2–aspartate 24.

The protein belongs to the long (4 C-C) scorpion toxin superfamily. Sodium channel inhibitor family. Alpha subfamily. As to expression, expressed by the venom gland.

The protein resides in the secreted. In terms of biological role, binds to sodium channels (Nav) and inhibits the inactivation of the activated channels, thereby blocking neuronal transmission. The chain is Neurotoxin 5 from Buthus occitanus tunetanus (Common European scorpion).